The chain runs to 536 residues: Chaperonin GroEL 1 (536 aa).

ATP is bound by residues 29 to 32, 86 to 90, glycine 413, 476 to 478, and aspartate 492; these read TLGP, DGTTT, and NAA.

The protein belongs to the chaperonin (HSP60) family. As to quaternary structure, forms a cylinder of 14 subunits composed of two heptameric rings stacked back-to-back. Interacts with the co-chaperonin GroES.

It is found in the cytoplasm. The enzyme catalyses ATP + H2O + a folded polypeptide = ADP + phosphate + an unfolded polypeptide.. Together with its co-chaperonin GroES, plays an essential role in assisting protein folding. The GroEL-GroES system forms a nano-cage that allows encapsulation of the non-native substrate proteins and provides a physical environment optimized to promote and accelerate protein folding. The polypeptide is Chaperonin GroEL 1 (Nocardia farcinica (strain IFM 10152)).